We begin with the raw amino-acid sequence, 754 residues long: Pentatricopeptide repeat-containing protein At3g53700, chloroplastic (754 aa).

The transit peptide at 1 to 72 (MAFSSCLKFY…DSAALRLFNL (72 aa)) directs the protein to the chloroplast. PPR repeat units follow at residues 82 to 116 (EPAL…RCEM), 117 to 152 (GTST…GLKP), 153 to 187 (DTHF…GIKP), 188 to 222 (DVST…GLVP), 223 to 257 (DEKT…GCSW), 258 to 288 (SNVS…MSNQ), 294 to 328 (DQYT…GYDP), 329 to 363 (DVYT…DCSP), 364 to 398 (NTVT…GILP), 399 to 433 (DVCT…GCEP), 434 to 468 (DEFT…GCAR), 469 to 503 (SVIT…GVSR), 504 to 538 (NSVT…GQKP), 539 to 573 (DKYT…GCEP), 574 to 608 (DIVT…GINL), 609 to 643 (TPHA…NEAP), and 645 to 680 (DAVS…GFVP).

The protein belongs to the PPR family. P subfamily.

Its subcellular location is the plastid. It is found in the chloroplast. Its function is as follows. May be involved in female gametophyte development. The protein is Pentatricopeptide repeat-containing protein At3g53700, chloroplastic (MEE40) of Arabidopsis thaliana (Mouse-ear cress).